Here is a 1002-residue protein sequence, read N- to C-terminus: E3 ubiquitin-protein ligase BRE1B (1002 aa).

Residues 1 to 32 form a disordered region; sequence MSGLSNKRAAGDGGSGPPEKKLNREEKTTTTL. The span at 18–28 shows a compositional bias: basic and acidic residues; sequence PEKKLNREEKT. An N6-acetyllysine modification is found at Lys-20. Ser-42 carries the post-translational modification Phosphoserine. Positions 55-91 form a coiled coil; the sequence is KNKKLAERLEQRQACEDELRERIEKLEKRQATDDATL. Positions 120–148 are disordered; sequence SSGTEVPGCQEGLTRDVIPRTDPGTSDLR. Coiled-coil stretches lie at residues 190 to 378 and 438 to 526; these read KAAV…LRSL and LQKK…ASGS. Residues Lys-356 and Lys-518 each carry the N6-acetyllysine modification. Disordered regions lie at residues 520–562 and 579–652; these read RAQA…PDSK and KKEE…ESEL. Residues Lys-579 and Lys-580 each participate in a glycyl lysine isopeptide (Lys-Gly) (interchain with G-Cter in SUMO2) cross-link. Phosphoserine occurs at positions 585 and 586. Basic and acidic residues-rich tracts occupy residues 603 to 620 and 634 to 652; these read RGREPEARPKRELREREG and RADREKAKAEEARRKESEL. Residues 628–947 are a coiled coil; the sequence is AASTLSRADR…EEIKEYKARL (320 aa). The RING-type zinc finger occupies 949-988; sequence CPCCNTRKKDAVLTKCFHVFCFECVRGRYEARQRKCPKCN.

Belongs to the BRE1 family. As to quaternary structure, component of the RNF20/40 complex (also known as BRE1 complex) probably composed of 2 copies of RNF20/BRE1A and 2 copies of RNF40/BRE1B. Interacts with UBE2E1/UBCH6. Interacts with RB1 and WAC. May interact with STX1A. In terms of tissue distribution, ubiquitously expressed. Expressed in brain, testis, heart, liver and kidney. Weakly expressed in lung, spleen and skeletal muscle (at protein level).

The protein localises to the nucleus. The catalysed reaction is S-ubiquitinyl-[E2 ubiquitin-conjugating enzyme]-L-cysteine + [acceptor protein]-L-lysine = [E2 ubiquitin-conjugating enzyme]-L-cysteine + N(6)-ubiquitinyl-[acceptor protein]-L-lysine.. It functions in the pathway protein modification; protein ubiquitination. In terms of biological role, component of the RNF20/40 E3 ubiquitin-protein ligase complex that mediates monoubiquitination of 'Lys-120' of histone H2B (H2BK120ub1). H2BK120ub1 gives a specific tag for epigenetic transcriptional activation and is also prerequisite for histone H3 'Lys-4' and 'Lys-79' methylation (H3K4me and H3K79me, respectively). It thereby plays a central role in histone code and gene regulation. The RNF20/40 complex forms a H2B ubiquitin ligase complex in cooperation with the E2 enzyme UBE2A or UBE2B; reports about the cooperation with UBE2E1/UBCH are contradictory. Required for transcriptional activation of Hox genes. This is E3 ubiquitin-protein ligase BRE1B (Rnf40) from Rattus norvegicus (Rat).